A 79-amino-acid chain; its full sequence is UPF0154 protein SAK_1616 (79 aa).

The chain crosses the membrane as a helical span at residues 5 to 25 (IWILLIIVALFGGLVGGIFIA).

It belongs to the UPF0154 family.

The protein localises to the cell membrane. The chain is UPF0154 protein SAK_1616 from Streptococcus agalactiae serotype Ia (strain ATCC 27591 / A909 / CDC SS700).